Reading from the N-terminus, the 72-residue chain is Protein CYSTEINE-RICH TRANSMEMBRANE MODULE 1 (72 aa).

The segment covering 1–11 (MSQYDHNQSAG) has biased composition (polar residues). The disordered stretch occupies residues 1–46 (MSQYDHNQSAGANPPPPMSTCTSPPPPIGYPTNQPSHGSVAQGKVE). Over residues 13-29 (NPPPPMSTCTSPPPPIG) the composition is skewed to pro residues. Residues 49-65 (SKGDGFFKGCLAAMCCC) traverse the membrane as a helical segment.

It belongs to the CYSTM1 family. Heterodimers. Binds weakly to CYSTM7 and WIH1/CYSTM13. In terms of tissue distribution, mostly expressed in roots, flowers and siliques and, to a lower extent, in stems and leaves.

It localises to the cell membrane. The protein resides in the nucleus. In terms of biological role, may be involved in aluminium (Al) tolerance. Involved in resistance to abiotic stress. This is Protein CYSTEINE-RICH TRANSMEMBRANE MODULE 1 from Arabidopsis thaliana (Mouse-ear cress).